The sequence spans 122 residues: Histone H2B.2 (122 aa).

A compositionally biased stretch (low complexity) spans M1–T10. Positions M1–K28 are disordered. A2 carries the n,N,N-trimethylalanine modification. K5 and K42 each carry N6-acetyllysine. Residue K116 forms a Glycyl lysine isopeptide (Lys-Gly) (interchain with G-Cter in ubiquitin) linkage.

It belongs to the histone H2B family. In terms of assembly, the nucleosome is a histone octamer containing two molecules each of H2A, H2B, H3 and H4 assembled in one H3-H4 heterotetramer and two H2A-H2B heterodimers. The octamer wraps approximately 147 bp of DNA. In terms of processing, acetylation occurs almost exclusively in the MAC. Post-translationally, monoubiquitination to form H2BK115ub1 gives a specific tag for epigenetic transcriptional activation and is also prerequisite for H3K4me and H3K79me formation.

The protein localises to the nucleus. Its subcellular location is the chromosome. Functionally, core component of nucleosome. Nucleosomes wrap and compact DNA into chromatin, limiting DNA accessibility to the cellular machineries which require DNA as a template. Histones thereby play a central role in transcription regulation, DNA repair, DNA replication and chromosomal stability. DNA accessibility is regulated via a complex set of post-translational modifications of histones, also called histone code, and nucleosome remodeling. The sequence is that of Histone H2B.2 (HTB2) from Tetrahymena thermophila (strain SB210).